The chain runs to 127 residues: MMRQSVQTVLPESTGNNTLSLRDSVCRDLFQLFSSPHSPLPILLVSGMPEWQGHNQSDKLLQSWYCRQLRSALLFHEPRIAALQVNLKAVYCHELVISLDMMLYHDDEPLTFDLVWQKGSWHRTMPQ.

The protein belongs to the GpW/Gp25 family. IraD subfamily. Interacts with RssB.

Its subcellular location is the cytoplasm. Inhibits RpoS proteolysis by regulating RssB activity, thereby increasing the stability of the sigma stress factor RpoS during oxidative stress. Its effect on RpoS stability is due to its interaction with RssB, which probably blocks the interaction of RssB with RpoS, and the consequent delivery of the RssB-RpoS complex to the ClpXP protein degradation pathway. The chain is Anti-adapter protein IraD from Escherichia coli O127:H6 (strain E2348/69 / EPEC).